Reading from the N-terminus, the 1052-residue chain is Mediator of RNA polymerase II transcription subunit 5 (1052 aa).

The disordered stretch occupies residues 949–982 (GGDDEQREQHQQQQPDADQSNQGVVAPTGNTPGN). A compositionally biased stretch (low complexity) spans 959-970 (QQQQPDADQSNQ).

The protein belongs to the Mediator complex subunit 5 family. As to quaternary structure, component of the Mediator complex.

The protein resides in the nucleus. Its function is as follows. Component of the Mediator complex, a coactivator involved in the regulated transcription of nearly all RNA polymerase II-dependent genes. Mediator functions as a bridge to convey information from gene-specific regulatory proteins to the basal RNA polymerase II transcription machinery. Mediator is recruited to promoters by direct interactions with regulatory proteins and serves as a scaffold for the assembly of a functional preinitiation complex with RNA polymerase II and the general transcription factors. The sequence is that of Mediator of RNA polymerase II transcription subunit 5 (NUT1) from Coccidioides immitis (strain RS) (Valley fever fungus).